A 281-amino-acid chain; its full sequence is Large ribosomal subunit protein uL2 (281 aa).

A disordered region spans residues 210–281; that stretch reads RTRYAGQRPH…RGRKRGPHTR (72 aa). Over residues 254 to 281 the composition is skewed to basic residues; it reads TVGKKTRSHKARSNKFIVRGRKRGPHTR.

Belongs to the universal ribosomal protein uL2 family. Part of the 50S ribosomal subunit. Forms a bridge to the 30S subunit in the 70S ribosome.

In terms of biological role, one of the primary rRNA binding proteins. Required for association of the 30S and 50S subunits to form the 70S ribosome, for tRNA binding and peptide bond formation. It has been suggested to have peptidyltransferase activity; this is somewhat controversial. Makes several contacts with the 16S rRNA in the 70S ribosome. The sequence is that of Large ribosomal subunit protein uL2 from Limosilactobacillus reuteri subsp. reuteri (strain JCM 1112) (Lactobacillus reuteri).